Consider the following 104-residue polypeptide: Large ribosomal subunit protein uL24 (104 aa).

It belongs to the universal ribosomal protein uL24 family. In terms of assembly, part of the 50S ribosomal subunit.

In terms of biological role, one of two assembly initiator proteins, it binds directly to the 5'-end of the 23S rRNA, where it nucleates assembly of the 50S subunit. Functionally, one of the proteins that surrounds the polypeptide exit tunnel on the outside of the subunit. The sequence is that of Large ribosomal subunit protein uL24 from Shewanella sediminis (strain HAW-EB3).